The primary structure comprises 530 residues: Membrane-associated transporter protein (530 aa).

Over 1-45 (MSGSNGPTDTHTYQSLAEDCPFGSVEQPKRSTGRLVMHSMAMFGR) the chain is Cytoplasmic. Residues 46–66 (EFCYAVEAAYVTPVLLSVGLP) form a helical membrane-spanning segment. At 67–68 (KS) the chain is on the extracellular side. A helical transmembrane segment spans residues 69-89 (LYSMVWLLSPILGFLLQPVVG). At 90 to 105 (SASDHCRARWGRRRPY) the chain is on the cytoplasmic side. Residues 106-126 (ILTLAIMMLLGMALYLNGDAV) traverse the membrane as a helical segment. Topologically, residues 127–138 (VSALVANPRQKL) are extracellular. The helical transmembrane segment at 139–159 (IWAISITMVGVVLFDFSADFI) threads the bilayer. Topologically, residues 160-184 (DGPIKAYLFDVCSHQDKEKGLHYHA) are cytoplasmic. Residues 185-205 (LFTGFGGALGYILGAIDWVHL) form a helical membrane-spanning segment. Residues 206 to 216 (DLGRLLGTEFQ) lie on the Extracellular side of the membrane. Residues 217-237 (VMFFFSALVLILCFITHLCSI) form a helical membrane-spanning segment. At 238–318 (PEAPLRDAAT…ALVNMPSHYR (81 aa)) the chain is on the cytoplasmic side. Residues 275-299 (KNGGADTEQPVQEWKNKKPSGQSQR) form a disordered region. Residues 319–339 (CLCVSHLIGWTAFLSNMLFFT) traverse the membrane as a helical segment. The Extracellular portion of the chain corresponds to 340 to 366 (DFMGQIVYHGDPYGAHNSTEFLIYERG). A glycan (N-linked (GlcNAc...) asparagine) is linked at Asn356. A helical transmembrane segment spans residues 367–387 (VEVGCWGLCINSVFSSVYSYF). At 388 to 398 (QKAMVSYIGLK) the chain is on the cytoplasmic side. Residues 399–419 (GLYFMGYLLFGLGTGFIGLFP) traverse the membrane as a helical segment. Topologically, residues 420-425 (NVYSTL) are extracellular. A helical membrane pass occupies residues 426-446 (VLCSMFGVMSSTLYTVPFNLI). Residues 447 to 477 (AEYHREEEKEKGQEAPGGPDNQGRGKGVDCA) lie on the Cytoplasmic side of the membrane. A helical transmembrane segment spans residues 478–498 (ALTCMVQLAQILVGGGLGFLV). Over 499-504 (NMAGSV) the chain is Extracellular. Residues 505 to 525 (VVVVITASAVSLIGCCFVALF) form a helical membrane-spanning segment. Over 526-530 (VRYVD) the chain is Cytoplasmic.

The protein belongs to the glycoside-pentoside-hexuronide (GPH) cation symporter transporter (TC 2.A.2) family. Interacts with TYRP1. Mainly expressed in eyeballs and skin melanocytes. Also detected in kidney, colon, gall bladder and pancreas.

The protein localises to the melanosome membrane. It carries out the reaction sucrose(out) + H(+)(out) = sucrose(in) + H(+)(in). The enzyme catalyses D-glucose(out) + H(+)(out) = D-glucose(in) + H(+)(in). Its function is as follows. Proton-associated glucose and sucrose transporter. May be able to transport also fructose. Expressed at a late melanosome maturation stage where functions as a proton/glucose exporter which increase lumenal pH by decreasing glycolysis. Regulates melanogenesis by maintaining melanosome neutralization that is initially initiated by transient OCA2 and required for a proper function of the tyrosinase TYR. The sequence is that of Membrane-associated transporter protein (Slc45a2) from Mus musculus (Mouse).